A 421-amino-acid chain; its full sequence is Putative nickel insertion protein (421 aa).

This sequence belongs to the LarC family.

In Gloeobacter violaceus (strain ATCC 29082 / PCC 7421), this protein is Putative nickel insertion protein.